Reading from the N-terminus, the 373-residue chain is uncharacterized protein (373 aa).

This is an uncharacterized protein from Methanocaldococcus jannaschii (strain ATCC 43067 / DSM 2661 / JAL-1 / JCM 10045 / NBRC 100440) (Methanococcus jannaschii).